A 404-amino-acid chain; its full sequence is Sorting nexin-5 (404 aa).

N-acetylalanine is present on Ala-2. A PX domain is found at 25-172 (LNVDPSLQID…HVFLEYDQDL (148 aa)). A 1,2-diacyl-sn-glycero-3-phospho-(1D-myo-inositol-4,5-bisphosphate) is bound by residues 40 to 46 (SERDKVK), 99 to 105 (FDGPREK), and 113 to 116 (EGSM). Residues 169-261 (DQDLSVRRKN…HSLALEEPTV (93 aa)) are interaction with DOCK1. A membrane-binding amphipathic helix region spans residues 183-200 (FGGFFKSVVKSADEVLFT). Ser-193 is subject to Phosphoserine. Positions 202–404 (VKEVDDFFEQ…QSCIDLFKNN (203 aa)) constitute a BAR domain. Lys-275 bears the N6-acetyllysine mark.

This sequence belongs to the sorting nexin family. Forms heterodimers with BAR domain-containing sorting nexins SNX1 and SNX2; does not homodimerize. The heterodimers are proposed to self-assemble into helical arrays on the membrane to stabilize and expand local membrane curvature underlying endosomal tubule formation. Thought to be a component of the originally described retromer complex (also called SNX-BAR retromer) which is a pentamer containing the heterotrimeric retromer cargo-selective complex (CSC), also described as vacuolar protein sorting subcomplex (VPS), and a heterodimeric membrane-deforming subcomplex formed between SNX1 or SNX2 and SNX5 or SNX6 (also called SNX-BAR subcomplex); the respective CSC and SNX-BAR subcomplexes associate with low affinity. Interacts with SNX1, SNX2, VPS26A, VPS29, VPS35, DCTN1, DOCK1, MIB1, PIP5K1C isoform 3. Interacts with HGS; increased by PIP5K1C isoform 3 kinase activity and by PtdIns(3P) and/or PtdIns(3,4)P2. In terms of assembly, (Microbial infection) Interacts with human cytomegalovirus proteins UL35 and UL35A; these interactions inhibit the ability of USP7 to form nuclear bodies.

The protein localises to the endosome. Its subcellular location is the early endosome. It is found in the early endosome membrane. It localises to the cell membrane. The protein resides in the cytoplasmic vesicle membrane. The protein localises to the cytoplasm. Its subcellular location is the cell projection. It is found in the phagocytic cup. It localises to the ruffle. Its function is as follows. Involved in several stages of intracellular trafficking. Interacts with membranes containing phosphatidylinositol 3-phosphate (PtdIns(3P)) or phosphatidylinositol 3,4-bisphosphate (PtdIns(3,4)P2). Acts in part as component of the retromer membrane-deforming SNX-BAR subcomplex. The SNX-BAR retromer mediates retrograde transport of cargo proteins from endosomes to the trans-Golgi network (TGN) and is involved in endosome-to-plasma membrane transport for cargo protein recycling. The SNX-BAR subcomplex functions to deform the donor membrane into a tubular profile called endosome-to-TGN transport carrier (ETC). Does not have in vitro vesicle-to-membrane remodeling activity. Involved in retrograde transport of lysosomal enzyme receptor IGF2R. May function as link between endosomal transport vesicles and dynactin. Plays a role in the internalization of EGFR after EGF stimulation. Involved in EGFR endosomal sorting and degradation; the function involves PIP5K1C isoform 3 and is retromer-independent. Together with PIP5K1C isoform 3 facilitates HGS interaction with ubiquitinated EGFR, which initiates EGFR sorting to intraluminal vesicles (ILVs) of the multivesicular body for subsequent lysosomal degradation. Involved in E-cadherin sorting and degradation; inhibits PIP5K1C isoform 3-mediated E-cadherin degradation. Plays a role in macropinocytosis. In Homo sapiens (Human), this protein is Sorting nexin-5 (SNX5).